The chain runs to 1025 residues: Multidrug resistance protein MdtC (1025 aa).

12 helical membrane-spanning segments follow: residues 3-23 (FFAL…AITL), 333-353 (EVEQ…FLFL), 360-380 (IIPA…MYLC), 387-407 (LSLM…IVVL), 431-451 (VGFT…PLLL), 463-483 (FAVT…TLTP), 528-548 (LVGV…ISIP), 853-873 (VILI…LYES), 875-895 (VHPL…LLAL), 897-917 (LFNA…IGIV), 953-973 (PIMM…LSGG), and 984-1004 (ITIV…TPVV).

This sequence belongs to the resistance-nodulation-cell division (RND) (TC 2.A.6) family. MdtC subfamily. As to quaternary structure, part of a tripartite efflux system composed of MdtA, MdtB and MdtC. MdtC forms a heteromultimer with MdtB.

It is found in the cell inner membrane. Functionally, the MdtABC tripartite complex confers resistance against novobiocin and deoxycholate. This Escherichia coli (strain SMS-3-5 / SECEC) protein is Multidrug resistance protein MdtC.